The following is a 224-amino-acid chain: Phosphoribosylformylglycinamidine synthase subunit PurQ (224 aa).

In terms of domain architecture, Glutamine amidotransferase type-1 spans 4-224; that stretch reads FGIIVFPGSN…ATDGLAMFIS (221 aa). Residue C87 is the Nucleophile of the active site. Active-site residues include H204 and E206.

Part of the FGAM synthase complex composed of 1 PurL, 1 PurQ and 2 PurS subunits.

The protein resides in the cytoplasm. It catalyses the reaction N(2)-formyl-N(1)-(5-phospho-beta-D-ribosyl)glycinamide + L-glutamine + ATP + H2O = 2-formamido-N(1)-(5-O-phospho-beta-D-ribosyl)acetamidine + L-glutamate + ADP + phosphate + H(+). The catalysed reaction is L-glutamine + H2O = L-glutamate + NH4(+). The protein operates within purine metabolism; IMP biosynthesis via de novo pathway; 5-amino-1-(5-phospho-D-ribosyl)imidazole from N(2)-formyl-N(1)-(5-phospho-D-ribosyl)glycinamide: step 1/2. Part of the phosphoribosylformylglycinamidine synthase complex involved in the purines biosynthetic pathway. Catalyzes the ATP-dependent conversion of formylglycinamide ribonucleotide (FGAR) and glutamine to yield formylglycinamidine ribonucleotide (FGAM) and glutamate. The FGAM synthase complex is composed of three subunits. PurQ produces an ammonia molecule by converting glutamine to glutamate. PurL transfers the ammonia molecule to FGAR to form FGAM in an ATP-dependent manner. PurS interacts with PurQ and PurL and is thought to assist in the transfer of the ammonia molecule from PurQ to PurL. This chain is Phosphoribosylformylglycinamidine synthase subunit PurQ, found in Synechocystis sp. (strain ATCC 27184 / PCC 6803 / Kazusa).